The chain runs to 257 residues: MVIINTAAYHFVSITQPQTLADQIRAHGEIAGLKGTVLIANEGINLFLAGEKEAINAFYAWLCADVRFAALHVKYSVSAYKPFARFKVKVRPEIISFRRGDISPLQVRAPGVSAHTLRDWLRRGCDDNGRRLVMLDARNQQEIAYGTFSGAMTLPITKFTGFPGALAHYRDLLSDATVVSFCTGGIRCEKAVLWMRADGMDNVLQLEGGILGYFEQVGGEGYDGRCFVFDKRVALDPQLRPLYDMRVVASFARSEIS.

In terms of domain architecture, Rhodanese spans 128-222; it reads NGRRLVMLDA…YFEQVGGEGY (95 aa). The Cysteine persulfide intermediate role is filled by Cys182.

This sequence belongs to the TrhO family.

It carries out the reaction uridine(34) in tRNA + AH2 + O2 = 5-hydroxyuridine(34) in tRNA + A + H2O. Its function is as follows. Catalyzes oxygen-dependent 5-hydroxyuridine (ho5U) modification at position 34 in tRNAs. This chain is tRNA uridine(34) hydroxylase, found in Xylella fastidiosa (strain M23).